A 197-amino-acid polypeptide reads, in one-letter code: Probable host range protein 2 (197 aa).

The disordered stretch occupies residues D172–E197. Over residues D174 to E197 the composition is skewed to acidic residues.

The protein belongs to the poxviridae C7 protein family.

This chain is Probable host range protein 2, found in Ovis aries (Sheep).